Reading from the N-terminus, the 78-residue chain is Large ribosomal subunit protein bL28 (78 aa).

The protein belongs to the bacterial ribosomal protein bL28 family.

The chain is Large ribosomal subunit protein bL28 from Thermosynechococcus vestitus (strain NIES-2133 / IAM M-273 / BP-1).